The sequence spans 395 residues: Glutamate N-acetyltransferase (395 aa).

Substrate is bound by residues threonine 146, lysine 169, threonine 180, glutamate 263, asparagine 390, and threonine 395. Catalysis depends on threonine 180, which acts as the Nucleophile.

Belongs to the ArgJ family. In terms of assembly, heterotetramer of two alpha and two beta chains.

The protein localises to the cytoplasm. It carries out the reaction N(2)-acetyl-L-ornithine + L-glutamate = N-acetyl-L-glutamate + L-ornithine. Its pathway is amino-acid biosynthesis; L-arginine biosynthesis; L-ornithine and N-acetyl-L-glutamate from L-glutamate and N(2)-acetyl-L-ornithine (cyclic): step 1/1. Its function is as follows. Catalyzes the transfer of the acetyl group from N(2)-acetylornithine to glutamate, forming N-acetylglutamate and L-ornithine. This chain is Glutamate N-acetyltransferase, found in Methanosarcina mazei (strain ATCC BAA-159 / DSM 3647 / Goe1 / Go1 / JCM 11833 / OCM 88) (Methanosarcina frisia).